We begin with the raw amino-acid sequence, 350 residues long: 3-dehydroquinate synthase (350 aa).

NAD(+) is bound by residues 106–110 (GVIGD), 130–131 (TS), lysine 143, and lysine 152. Zn(2+)-binding residues include glutamate 185, histidine 246, and histidine 263.

Belongs to the sugar phosphate cyclases superfamily. Dehydroquinate synthase family. Requires Co(2+) as cofactor. It depends on Zn(2+) as a cofactor. NAD(+) is required as a cofactor.

The protein resides in the cytoplasm. The catalysed reaction is 7-phospho-2-dehydro-3-deoxy-D-arabino-heptonate = 3-dehydroquinate + phosphate. The protein operates within metabolic intermediate biosynthesis; chorismate biosynthesis; chorismate from D-erythrose 4-phosphate and phosphoenolpyruvate: step 2/7. Its function is as follows. Catalyzes the conversion of 3-deoxy-D-arabino-heptulosonate 7-phosphate (DAHP) to dehydroquinate (DHQ). The chain is 3-dehydroquinate synthase from Clostridium botulinum (strain Alaska E43 / Type E3).